The chain runs to 418 residues: Phosphopentomutase (418 aa).

Residues Asp-10, Asp-297, His-302, Asp-338, His-339, and His-350 each contribute to the Mn(2+) site.

It belongs to the phosphopentomutase family. The cofactor is Mn(2+).

It localises to the cytoplasm. It catalyses the reaction 2-deoxy-alpha-D-ribose 1-phosphate = 2-deoxy-D-ribose 5-phosphate. It carries out the reaction alpha-D-ribose 1-phosphate = D-ribose 5-phosphate. Its pathway is carbohydrate degradation; 2-deoxy-D-ribose 1-phosphate degradation; D-glyceraldehyde 3-phosphate and acetaldehyde from 2-deoxy-alpha-D-ribose 1-phosphate: step 1/2. Isomerase that catalyzes the conversion of deoxy-ribose 1-phosphate (dRib-1-P) and ribose 1-phosphate (Rib-1-P) to deoxy-ribose 5-phosphate (dRib-5-P) and ribose 5-phosphate (Rib-5-P), respectively. This Chromohalobacter salexigens (strain ATCC BAA-138 / DSM 3043 / CIP 106854 / NCIMB 13768 / 1H11) protein is Phosphopentomutase.